The following is a 452-amino-acid chain: uncharacterized protein (452 aa).

A TRAM domain is found at 3–61 (KVKIGEKYEVDITSMGHEGEGVGRIDGIAVFVKGALKGERVIVEIEEVHKNYLKGYTVK). [4Fe-4S] cluster contacts are provided by C74, C80, C83, and C160. Positions 284, 313, 334, and 382 each coordinate S-adenosyl-L-methionine. C409 serves as the catalytic Nucleophile.

It belongs to the class I-like SAM-binding methyltransferase superfamily. RNA M5U methyltransferase family.

This is an uncharacterized protein from Caldanaerobacter subterraneus subsp. tengcongensis (strain DSM 15242 / JCM 11007 / NBRC 100824 / MB4) (Thermoanaerobacter tengcongensis).